Here is a 216-residue protein sequence, read N- to C-terminus: Phosphatidylserine decarboxylase proenzyme (216 aa).

Ser185 functions as the Schiff-base intermediate with substrate; via pyruvic acid in the catalytic mechanism. Pyruvic acid (Ser); by autocatalysis is present on Ser185.

The protein belongs to the phosphatidylserine decarboxylase family. PSD-A subfamily. In terms of assembly, heterodimer of a large membrane-associated beta subunit and a small pyruvoyl-containing alpha subunit. It depends on pyruvate as a cofactor. Is synthesized initially as an inactive proenzyme. Formation of the active enzyme involves a self-maturation process in which the active site pyruvoyl group is generated from an internal serine residue via an autocatalytic post-translational modification. Two non-identical subunits are generated from the proenzyme in this reaction, and the pyruvate is formed at the N-terminus of the alpha chain, which is derived from the carboxyl end of the proenzyme. The post-translation cleavage follows an unusual pathway, termed non-hydrolytic serinolysis, in which the side chain hydroxyl group of the serine supplies its oxygen atom to form the C-terminus of the beta chain, while the remainder of the serine residue undergoes an oxidative deamination to produce ammonia and the pyruvoyl prosthetic group on the alpha chain.

The protein localises to the cell membrane. The enzyme catalyses a 1,2-diacyl-sn-glycero-3-phospho-L-serine + H(+) = a 1,2-diacyl-sn-glycero-3-phosphoethanolamine + CO2. It participates in phospholipid metabolism; phosphatidylethanolamine biosynthesis; phosphatidylethanolamine from CDP-diacylglycerol: step 2/2. Catalyzes the formation of phosphatidylethanolamine (PtdEtn) from phosphatidylserine (PtdSer). This Nitrosomonas europaea (strain ATCC 19718 / CIP 103999 / KCTC 2705 / NBRC 14298) protein is Phosphatidylserine decarboxylase proenzyme.